Here is a 955-residue protein sequence, read N- to C-terminus: Valine--tRNA ligase (955 aa).

Residues 41–51 (PNITGSLHMGH) carry the 'HIGH' region motif. The short motif at 554–558 (KMSKS) is the 'KMSKS' region element. K557 is an ATP binding site. The stretch at 926-946 (QEKNKLLKLNEINLKLSEQIK) forms a coiled coil.

It belongs to the class-I aminoacyl-tRNA synthetase family. ValS type 1 subfamily. Monomer.

It localises to the cytoplasm. The enzyme catalyses tRNA(Val) + L-valine + ATP = L-valyl-tRNA(Val) + AMP + diphosphate. In terms of biological role, catalyzes the attachment of valine to tRNA(Val). As ValRS can inadvertently accommodate and process structurally similar amino acids such as threonine, to avoid such errors, it has a 'posttransfer' editing activity that hydrolyzes mischarged Thr-tRNA(Val) in a tRNA-dependent manner. This Buchnera aphidicola subsp. Acyrthosiphon pisum (strain APS) (Acyrthosiphon pisum symbiotic bacterium) protein is Valine--tRNA ligase.